Here is a 482-residue protein sequence, read N- to C-terminus: Lipoamide acyltransferase component of branched-chain alpha-keto acid dehydrogenase complex, mitochondrial (482 aa).

The N-terminal 61 residues, 1 to 61 (MAAVRMLRTW…HFLKTTAALR (61 aa)), are a transit peptide targeting the mitochondrion. Residues 64–139 (VVQFKLSDIG…YVGKPLVDIE (76 aa)) enclose the Lipoyl-binding domain. Residue Lys-105 is modified to N6-lipoyllysine. Lys-133 bears the N6-succinyllysine mark. Residues 145–160 (DSEEDVVETPAVSHDE) form a critical for association with PPM1K region. A disordered region spans residues 147–168 (EEDVVETPAVSHDEHTHQEIKG). Residues 157–168 (SHDEHTHQEIKG) are compositionally biased toward basic and acidic residues. Positions 172-209 (LATPAVRRLAMENNIKLSEVVGSGKDGRILKEDILNYL) constitute a Peripheral subunit-binding (PSBD) domain. An N6-acetyllysine; alternate modification is found at Lys-196. Lys-196 carries the N6-succinyllysine; alternate modification. Lys-202 carries the post-translational modification N6-acetyllysine. A Phosphoserine modification is found at Ser-220. 2 positions are modified to N6-acetyllysine: Lys-243 and Lys-250. Lys-261 is modified (N6-succinyllysine). The residue at position 289 (Lys-289) is an N6-acetyllysine; alternate. Lys-289 is modified (N6-succinyllysine; alternate). Arg-291 contacts CoA. An N6-acetyllysine mark is found at Lys-295 and Lys-304. The CoA site is built by Ser-306, Asp-349, Gln-378, Ser-399, Asn-400, Ser-403, Gly-424, and Ile-426. Lys-435 carries the N6-acetyllysine modification. Lys-440 carries the post-translational modification N6-acetyllysine; alternate. Lys-440 is modified (N6-succinyllysine; alternate). Catalysis depends on residues His-452 and Asp-456.

This sequence belongs to the 2-oxoacid dehydrogenase family. In terms of assembly, forms a 24-polypeptide structural core with octahedral symmetry that represents the E2 component of the branched-chain alpha-ketoacid dehydrogenase (BCKDH) complex. The BCKDH complex is composed of three major building blocks E1, E2 and E3. It is organized around E2, a 24-meric cubic core composed of DBT, to which are associated 6 to 12 copies of E1, and approximately 6 copies of the dehydrogenase E3, a DLD dimer. Interacts with PPM1K with a 24:1 stoichiometry; the N-terminal region (residues 49-61) of PPM1K and C-terminal linker of the lipoyl domain of DBT/E2 (residues 145-160) are critical for this interaction whereas the lipoyl prosthetic group is dispensable. This interaction requires colocalization in mitochondria. PPM1K competes with BCKDK for binding to DBT; this interaction is modulated by branched-chain alpha-keto acids (BCKAs). At steady state, BCKDH holoenzyme preferentially binds BCKDK and BCKDHA is phosphorylated. In response to high levels of BCKAs, BCKDK is replaced by PPM1K leading to BCKDHA dephosphorylation. Requires (R)-lipoate as cofactor.

Its subcellular location is the mitochondrion matrix. The enzyme catalyses N(6)-[(R)-dihydrolipoyl]-L-lysyl-[protein] + 2-methylpropanoyl-CoA = N(6)-[(R)-S(8)-2-methylpropanoyldihydrolipoyl]-L-lysyl-[protein] + CoA. In terms of biological role, the branched-chain alpha-keto dehydrogenase complex catalyzes the overall conversion of alpha-keto acids to acyl-CoA and CO(2). It contains multiple copies of three enzymatic components: branched-chain alpha-keto acid decarboxylase (E1), lipoamide acyltransferase (E2) and lipoamide dehydrogenase (E3). Within this complex, the catalytic function of this enzyme is to accept, and to transfer to coenzyme A, acyl groups that are generated by the branched-chain alpha-keto acid decarboxylase component. This chain is Lipoamide acyltransferase component of branched-chain alpha-keto acid dehydrogenase complex, mitochondrial, found in Homo sapiens (Human).